The following is a 310-amino-acid chain: Probable cell division protein WhiA (310 aa).

The segment at residues 277 to 310 (SLKELAEQVPDGPISKSGVNHRLKKLHEIAENLR) is a DNA-binding region (H-T-H motif).

Belongs to the WhiA family.

Involved in cell division and chromosome segregation. In Lactobacillus delbrueckii subsp. bulgaricus (strain ATCC 11842 / DSM 20081 / BCRC 10696 / JCM 1002 / NBRC 13953 / NCIMB 11778 / NCTC 12712 / WDCM 00102 / Lb 14), this protein is Probable cell division protein WhiA.